Here is a 256-residue protein sequence, read N- to C-terminus: Imidazole glycerol phosphate synthase subunit HisF (256 aa).

Catalysis depends on residues Asp11 and Asp130.

This sequence belongs to the HisA/HisF family. In terms of assembly, heterodimer of HisH and HisF.

It localises to the cytoplasm. The enzyme catalyses 5-[(5-phospho-1-deoxy-D-ribulos-1-ylimino)methylamino]-1-(5-phospho-beta-D-ribosyl)imidazole-4-carboxamide + L-glutamine = D-erythro-1-(imidazol-4-yl)glycerol 3-phosphate + 5-amino-1-(5-phospho-beta-D-ribosyl)imidazole-4-carboxamide + L-glutamate + H(+). It functions in the pathway amino-acid biosynthesis; L-histidine biosynthesis; L-histidine from 5-phospho-alpha-D-ribose 1-diphosphate: step 5/9. In terms of biological role, IGPS catalyzes the conversion of PRFAR and glutamine to IGP, AICAR and glutamate. The HisF subunit catalyzes the cyclization activity that produces IGP and AICAR from PRFAR using the ammonia provided by the HisH subunit. The sequence is that of Imidazole glycerol phosphate synthase subunit HisF from Prochlorococcus marinus (strain NATL1A).